A 275-amino-acid polypeptide reads, in one-letter code: MPELPEVETVCRRLRPAVSGKTIQSVDVLDPKIIRGLDPEEWVHHLIGETITDVERRGKFILFKLTNGYLVSHLRMEGKFFPYETATEPVKHTHVVITFTDQSTLHYNDVRKFGTMELRTNETIHTTPPLSLLAYEPFDERVTTEALHRRLERMKTRAIKTALLDQSIFVGLGNIYVDETLFRAGVHPTRPAASLSREEVDRVRTEAVAVLNEAIERGGSTIRSYADPDGATGTFQERLYVYGQTGEPCRRCGHEIEKMKLGGRGTHYCPHCQQR.

Catalysis depends on P2, which acts as the Schiff-base intermediate with DNA. E3 acts as the Proton donor in catalysis. Catalysis depends on K59, which acts as the Proton donor; for beta-elimination activity. DNA contacts are provided by H92, R111, and K155. Residues 240–274 form an FPG-type zinc finger; it reads YVYGQTGEPCRRCGHEIEKMKLGGRGTHYCPHCQQ. R264 acts as the Proton donor; for delta-elimination activity in catalysis.

The protein belongs to the FPG family. As to quaternary structure, monomer. Zn(2+) is required as a cofactor.

It carries out the reaction Hydrolysis of DNA containing ring-opened 7-methylguanine residues, releasing 2,6-diamino-4-hydroxy-5-(N-methyl)formamidopyrimidine.. It catalyses the reaction 2'-deoxyribonucleotide-(2'-deoxyribose 5'-phosphate)-2'-deoxyribonucleotide-DNA = a 3'-end 2'-deoxyribonucleotide-(2,3-dehydro-2,3-deoxyribose 5'-phosphate)-DNA + a 5'-end 5'-phospho-2'-deoxyribonucleoside-DNA + H(+). Functionally, involved in base excision repair of DNA damaged by oxidation or by mutagenic agents. Acts as a DNA glycosylase that recognizes and removes damaged bases. Has a preference for oxidized purines, such as 7,8-dihydro-8-oxoguanine (8-oxoG). Has AP (apurinic/apyrimidinic) lyase activity and introduces nicks in the DNA strand. Cleaves the DNA backbone by beta-delta elimination to generate a single-strand break at the site of the removed base with both 3'- and 5'-phosphates. The chain is Formamidopyrimidine-DNA glycosylase from Exiguobacterium sp. (strain ATCC BAA-1283 / AT1b).